Here is a 117-residue protein sequence, read N- to C-terminus: uncharacterized protein (117 aa).

It is found in the mitochondrion. This is an uncharacterized protein from Arabidopsis thaliana (Mouse-ear cress).